A 448-amino-acid polypeptide reads, in one-letter code: Phosphoglucosamine mutase (448 aa).

The active-site Phosphoserine intermediate is the Ser104. The Mg(2+) site is built by Ser104, Asp241, Asp243, and Asp245. Ser104 carries the post-translational modification Phosphoserine.

The protein belongs to the phosphohexose mutase family. It depends on Mg(2+) as a cofactor. In terms of processing, activated by phosphorylation.

The enzyme catalyses alpha-D-glucosamine 1-phosphate = D-glucosamine 6-phosphate. Its function is as follows. Catalyzes the conversion of glucosamine-6-phosphate to glucosamine-1-phosphate. This Nocardioides sp. (strain ATCC BAA-499 / JS614) protein is Phosphoglucosamine mutase.